Reading from the N-terminus, the 122-residue chain is Large ribosomal subunit protein uL14 (122 aa).

Belongs to the universal ribosomal protein uL14 family. Part of the 50S ribosomal subunit. Forms a cluster with proteins L3 and L19. In the 70S ribosome, L14 and L19 interact and together make contacts with the 16S rRNA in bridges B5 and B8.

Functionally, binds to 23S rRNA. Forms part of two intersubunit bridges in the 70S ribosome. The protein is Large ribosomal subunit protein uL14 of Rickettsia africae (strain ESF-5).